The primary structure comprises 184 residues: Vacuolar protein sorting-associated protein 68 (184 aa).

N-acetylmethionine is present on M1. A Phosphoserine modification is found at S8. A helical membrane pass occupies residues 26–46 (GVYLSGALYALGFWIFLDAVL). N52 carries N-linked (GlcNAc...) asparagine glycosylation. The next 3 helical transmembrane spans lie at 56-76 (VHVT…TLIV), 115-135 (LFFG…VLII), and 150-170 (MGVN…VLWI).

Belongs to the UPF0220 family.

It localises to the vacuole membrane. The protein resides in the mitochondrion. In terms of biological role, involved in vacuolar protein sorting. This Saccharomyces cerevisiae (strain ATCC 204508 / S288c) (Baker's yeast) protein is Vacuolar protein sorting-associated protein 68 (VPS68).